The sequence spans 310 residues: HTH-type transcriptional regulator PunR (310 aa).

Positions 2–59 constitute an HTH lysR-type domain; it reads WSEYSLEVVDAVARNGSFSAAAQELHRVPSAVSYTVRQLEEWLAVPLFERRHRDVELT. Positions 19-38 form a DNA-binding region, H-T-H motif; the sequence is FSAAAQELHRVPSAVSYTVR.

The protein belongs to the LysR transcriptional regulatory family.

Its subcellular location is the cytoplasm. In terms of biological role, transcriptional regulator that activates the expression of punC, which encodes a purine nucleoside transporter. The sequence is that of HTH-type transcriptional regulator PunR from Escherichia coli O157:H7.